The chain runs to 278 residues: Large ribosomal subunit protein uL2 (278 aa).

Basic residues-rich tracts occupy residues 210-220 (GRMRWKGKRPS) and 257-278 (TRRK…NKKR). The interval 210–278 (GRMRWKGKRP…VRRRKSNKKR (69 aa)) is disordered.

It belongs to the universal ribosomal protein uL2 family. As to quaternary structure, part of the 50S ribosomal subunit. Forms a bridge to the 30S subunit in the 70S ribosome.

One of the primary rRNA binding proteins. Required for association of the 30S and 50S subunits to form the 70S ribosome, for tRNA binding and peptide bond formation. It has been suggested to have peptidyltransferase activity; this is somewhat controversial. Makes several contacts with the 16S rRNA in the 70S ribosome. The chain is Large ribosomal subunit protein uL2 from Acidothermus cellulolyticus (strain ATCC 43068 / DSM 8971 / 11B).